The primary structure comprises 205 residues: Cell wall / vacuolar inhibitor of fructosidase 1 (205 aa).

An N-terminal signal peptide occupies residues 1 to 23; that stretch reads MKMMKVMMLIVMMMMVMVMVSEG. Cystine bridges form between Cys-30–Cys-39 and Cys-93–Cys-134. N-linked (GlcNAc...) asparagine glycosylation is found at Asn-139 and Asn-156.

Belongs to the PMEI family. In terms of tissue distribution, mostly expressed in roots, senescent leaves and flowers (in sepals), and, to a lower extent, in stems, specifically in the vascular tissues (e.g. in the phloem).

The protein resides in the vacuole. Inhibits fructosidases from vacuoles (vacuolar invertase VI). In Arabidopsis thaliana (Mouse-ear cress), this protein is Cell wall / vacuolar inhibitor of fructosidase 1 (C/VIF1).